Reading from the N-terminus, the 96-residue chain is Small ribosomal subunit protein bS6 (96 aa).

Belongs to the bacterial ribosomal protein bS6 family.

Functionally, binds together with bS18 to 16S ribosomal RNA. In Streptococcus mutans serotype c (strain ATCC 700610 / UA159), this protein is Small ribosomal subunit protein bS6.